A 553-amino-acid polypeptide reads, in one-letter code: Glutamate--tRNA ligase (553 aa).

The 'HIGH' region motif lies at Pro-98 to His-108.

It belongs to the class-I aminoacyl-tRNA synthetase family. Glutamate--tRNA ligase type 2 subfamily.

The protein resides in the cytoplasm. It catalyses the reaction tRNA(Glu) + L-glutamate + ATP = L-glutamyl-tRNA(Glu) + AMP + diphosphate. Catalyzes the attachment of glutamate to tRNA(Glu) in a two-step reaction: glutamate is first activated by ATP to form Glu-AMP and then transferred to the acceptor end of tRNA(Glu). The sequence is that of Glutamate--tRNA ligase from Methanocaldococcus jannaschii (strain ATCC 43067 / DSM 2661 / JAL-1 / JCM 10045 / NBRC 100440) (Methanococcus jannaschii).